We begin with the raw amino-acid sequence, 464 residues long: MMDKKCTLCFLFLLLLNMALIAAESEEGANQTDLGVTRNKIMTAQYECYQKIMQDPIQQGEGLYCNRTWDGWLCWNDVAAGTESMQYCPDYFQDFDPSEKVTKICDQDGNWFRHPDSNRTWTNYTLCNNSTHEKVKTALNLFYLTIIGHGLSIASLIISLIIFFYFKSLSCQRITLHKNLFFSFVCNSIVTIIHLTAVANNQALVATNPVSCKVSQFIHLYLMGCNYFWMLCEGIYLHTLIVVAVFAEKQHLMWYYFLGWGFPLLPACIHAIARSLYYNDNCWISSDTHLLYIIHGPICAALLVNLFFLLNIVRVLITKLKVTHQAESNLYMKAVRATLILVPLLGIEFVLFPWRPEGKVAEEVYDYVMHILMHYQGLLVSTIFCFFNGEVQAILRRNWNQYKIQFGNGFSHSDALRSASYTVSTISDVQGYSHDCPTEHLNGKSIQDIENVALKPEKMYDLVM.

An N-terminal signal peptide occupies residues 1–23 (MMDKKCTLCFLFLLLLNMALIAA). The Extracellular portion of the chain corresponds to 24–139 (ESEEGANQTD…STHEKVKTAL (116 aa)). N-linked (GlcNAc...) asparagine glycans are attached at residues Asn30, Asn66, Asn118, Asn123, Asn128, and Asn129. 3 disulfide bridges follow: Cys48-Cys74, Cys65-Cys105, and Cys88-Cys127. Residues 140–164 (NLFYLTIIGHGLSIASLIISLIIFF) traverse the membrane as a helical segment. Over 165–175 (YFKSLSCQRIT) the chain is Cytoplasmic. The helical transmembrane segment at 176-198 (LHKNLFFSFVCNSIVTIIHLTAV) threads the bilayer. Over 199–209 (ANNQALVATNP) the chain is Extracellular. A helical membrane pass occupies residues 210–238 (VSCKVSQFIHLYLMGCNYFWMLCEGIYLH). Residues 239 to 252 (TLIVVAVFAEKQHL) are Cytoplasmic-facing. A helical transmembrane segment spans residues 253–273 (MWYYFLGWGFPLLPACIHAIA). Over 274 to 289 (RSLYYNDNCWISSDTH) the chain is Extracellular. The interval 288–289 (TH) is required for RAMP3 interaction. A helical membrane pass occupies residues 290-314 (LLYIIHGPICAALLVNLFFLLNIVR). Residues 315 to 329 (VLITKLKVTHQAESN) lie on the Cytoplasmic side of the membrane. Residues 330-351 (LYMKAVRATLILVPLLGIEFVL) traverse the membrane as a helical segment. Over 352 to 366 (FPWRPEGKVAEEVYD) the chain is Extracellular. The chain crosses the membrane as a helical span at residues 367 to 387 (YVMHILMHYQGLLVSTIFCFF). Over 388-464 (NGEVQAILRR…KPEKMYDLVM (77 aa)) the chain is Cytoplasmic. A phosphoserine mark is found at Ser420 and Ser445.

The protein belongs to the G-protein coupled receptor 2 family. As to quaternary structure, heterodimer of CALCRL and RAMP1; the receptor complex functions as CGRP receptor. Heterodimer of CALCRL and RAMP2 or CALCRL and RAMP3; the complexes function as adrenomedullin receptor.

The protein localises to the cell membrane. Its function is as follows. G protein-coupled receptor which specificity is determined by its interaction with receptor-activity-modifying proteins (RAMPs). Together with RAMP1, form the receptor complex for calcitonin-gene-related peptides CALCA/CGRP1 and CALCB/CGRP2. Together with RAMP2 or RAMP3, function as receptor complexes for adrenomedullin (ADM and ADM2). Ligand binding causes a conformation change that triggers signaling via guanine nucleotide-binding proteins (G proteins) and modulates the activity of downstream effectors. Activates cAMP-dependent pathway. The chain is Calcitonin gene-related peptide type 1 receptor from Rattus norvegicus (Rat).